A 396-amino-acid chain; its full sequence is Putative protein IntB (396 aa).

The region spanning Arg71–Val151 is the Core-binding (CB) domain. The Tyr recombinase domain occupies Gln174–Leu367. Residues Arg213, Lys252, His316, Arg319, and His343 contribute to the active site. Residue Tyr353 is the O-(3'-phospho-DNA)-tyrosine intermediate of the active site.

This sequence belongs to the 'phage' integrase family.

The sequence is that of Putative protein IntB (intB) from Escherichia coli (strain K12).